A 504-amino-acid chain; its full sequence is Glucosaminyl-phosphatidylinositol-acyltransferase PIGW (504 aa).

At M1–E21 the chain is on the lumenal side. N15 carries an N-linked (GlcNAc...) asparagine glycan. The helical transmembrane segment at I22–F42 threads the bilayer. Over S43 to R56 the chain is Cytoplasmic. A helical membrane pass occupies residues F57–W75. The Lumenal segment spans residues A76 to L81. Residues E82 to Y98 traverse the membrane as a helical segment. Topologically, residues R99–C131 are cytoplasmic. A helical transmembrane segment spans residues F132 to F152. Topologically, residues P153–Y162 are lumenal. A helical transmembrane segment spans residues G163–L183. Topologically, residues E184 to S202 are cytoplasmic. A helical transmembrane segment spans residues L203–I223. Residues G224–N237 are Lumenal-facing. Residues F238–L258 traverse the membrane as a helical segment. At N259–K260 the chain is on the cytoplasmic side. Residues S261 to L281 form a helical membrane-spanning segment. Over K282–G305 the chain is Lumenal. The chain crosses the membrane as a helical span at residues I306 to M326. Topologically, residues H327–K338 are cytoplasmic. The helical transmembrane segment at V339–V359 threads the bilayer. At N360–N370 the chain is on the lumenal side. A helical membrane pass occupies residues L371 to G391. Residues D392–Q448 are Cytoplasmic-facing. At S416 the chain carries Phosphoserine. Residues L449–L469 traverse the membrane as a helical segment. The Lumenal portion of the chain corresponds to H470–T473. The helical transmembrane segment at L474–L494 threads the bilayer. Residues Y495 to W504 are Cytoplasmic-facing.

It belongs to the PIGW family.

It is found in the endoplasmic reticulum membrane. The protein operates within glycolipid biosynthesis; glycosylphosphatidylinositol-anchor biosynthesis. Its function is as follows. Acyltransferase that catalyzes the acyl transfer from an acyl-CoA at the 2-OH position of the inositol ring of glucosaminyl phosphatidylinositol (GlcN-PI) to generate glucosaminyl acyl phosphatidylinositol (GlcN-(acyl)PI) and participates in the fourth step of GPI-anchor biosynthesis. Required for the transport of GPI-anchored proteins to the plasma membrane. Acetylation during GPI-anchor biosynthesis is not essential for the subsequent mannosylation and is usually removed soon after the attachment of GPIs to proteins. The sequence is that of Glucosaminyl-phosphatidylinositol-acyltransferase PIGW from Homo sapiens (Human).